The sequence spans 99 residues: Apolipoprotein C-III (99 aa).

An N-terminal signal peptide occupies residues Met-1–Ala-20. Met-63 bears the Methionine sulfoxide mark. Positions Arg-68–Ser-99 are lipid-binding. O-linked (GalNAc...) threonine glycosylation occurs at Thr-94.

It belongs to the apolipoprotein C3 family. The most abundant glycoforms are characterized by an O-linked disaccharide galactose linked to N-acetylgalactosamine (Gal-GalNAc), further modified with up to 3 sialic acid residues. Less abundant glycoforms are characterized by more complex and fucosylated glycan moieties. O-glycosylated on Thr-94 with a core 1 or possibly core 8 glycan.

The protein resides in the secreted. Its function is as follows. Component of triglyceride-rich very low density lipoproteins (VLDL) and high density lipoproteins (HDL) in plasma. Plays a multifaceted role in triglyceride homeostasis. Intracellularly, promotes hepatic very low density lipoprotein 1 (VLDL1) assembly and secretion; extracellularly, attenuates hydrolysis and clearance of triglyceride-rich lipoproteins (TRLs). Impairs the lipolysis of TRLs by inhibiting lipoprotein lipase and the hepatic uptake of TRLs by remnant receptors. Formed of several curved helices connected via semiflexible hinges, so that it can wrap tightly around the curved micelle surface and easily adapt to the different diameters of its natural binding partners. The chain is Apolipoprotein C-III (Apoc3) from Mus musculus (Mouse).